Here is a 244-residue protein sequence, read N- to C-terminus: DNA repair protein RecO (244 aa).

Belongs to the RecO family.

In terms of biological role, involved in DNA repair and RecF pathway recombination. The polypeptide is DNA repair protein RecO (Myxococcus xanthus (strain DK1622)).